We begin with the raw amino-acid sequence, 94 residues long: Cyclin-dependent kinases regulatory subunit (94 aa).

This sequence belongs to the CKS family. As to quaternary structure, forms a homohexamer that can probably bind six kinase subunits. Interacts with cdk-1.

Its subcellular location is the nucleus. Binds to the catalytic subunit of the cyclin dependent kinases and is essential for their biological function. Has a role in the exit from M phase during early mitotic cell division. More specifically, thought to act by degrading B-type cyclins that causes breakdown of nuclear envelope and exit mitosis. This is Cyclin-dependent kinases regulatory subunit (cks-1) from Caenorhabditis elegans.